Reading from the N-terminus, the 192-residue chain is UPF0312 protein ECA1782 (192 aa).

The N-terminal stretch at 1–23 (MLKKTLLSLTAVSMLASAGSALA) is a signal peptide.

Belongs to the UPF0312 family. Type 1 subfamily.

It is found in the periplasm. The chain is UPF0312 protein ECA1782 from Pectobacterium atrosepticum (strain SCRI 1043 / ATCC BAA-672) (Erwinia carotovora subsp. atroseptica).